The following is a 361-amino-acid chain: Putative agmatine deiminase (361 aa).

Cys354 (amidino-cysteine intermediate) is an active-site residue.

Belongs to the agmatine deiminase family.

The enzyme catalyses agmatine + H2O = N-carbamoylputrescine + NH4(+). The chain is Putative agmatine deiminase from Streptococcus pneumoniae (strain ATCC 700669 / Spain 23F-1).